The primary structure comprises 121 residues: Keratin-associated protein 1-4 (121 aa).

The protein belongs to the KRTAP type 1 family. Interacts with hair keratins. Expressed in the middle/upper portions of the hair cortex, in the region termed the keratogenous zone.

In terms of biological role, in the hair cortex, hair keratin intermediate filaments are embedded in an interfilamentous matrix, consisting of hair keratin-associated proteins (KRTAP), which are essential for the formation of a rigid and resistant hair shaft through their extensive disulfide bond cross-linking with abundant cysteine residues of hair keratins. The matrix proteins include the high-sulfur and high-glycine-tyrosine keratins. This chain is Keratin-associated protein 1-4 (KRTAP1-4), found in Homo sapiens (Human).